Here is a 431-residue protein sequence, read N- to C-terminus: uncharacterized protein (431 aa).

12 helical membrane-spanning segments follow: residues 33–53 (VARVGTAAAVTALCGYAVIYL), 63–83 (FSVFGVFWGAFGLVTGAANGL), 111–131 (VSGMVGLGSLVVIAGSSPLWS), 143–163 (VALLSIGLAGFCLHATLLGML), 175–195 (LMVADAVIRVVVAAATFVIGW), 197–217 (LVGFIWATVAGSVAWLIMLMT), 241–261 (AHSIIAAGASAILVMGFPVLL), 273–293 (GVVILAVTLTRAPLLVPLTAM), 318–338 (LIGGVGAVGMLAAGVVGPWIM), 358–378 (AAAVAIAMLTLTGAAAVAAAL), 381–401 (AYSLGWVGATVGSGLLLLLPL), and 407–427 (TVVALLCGPLVGIGVHLVALA).

To M.tuberculosis Rv1510 and M.bovis Mb3654.

The protein resides in the cell membrane. This is an uncharacterized protein from Mycobacterium tuberculosis (strain ATCC 25618 / H37Rv).